The sequence spans 365 residues: Dehydroprecondylocarpine acetate synthase (365 aa).

Zn(2+)-binding residues include Cys-105, Cys-108, Cys-111, and Cys-119. N-linked (GlcNAc...) asparagine glycosylation is found at Asn-142 and Asn-147. Residues Leu-194, Gly-196, Leu-197, Ser-216, Thr-217, Thr-218, Lys-221, Leu-279, Ala-281, Ser-303, Ala-305, and Arg-350 each coordinate NADP(+).

It belongs to the zinc-containing alcohol dehydrogenase family. In terms of assembly, homodimer. Interaction with catharanthine synthase (CS) and tabersonine synthase (TS). It depends on Zn(2+) as a cofactor.

It localises to the cytoplasm. The protein localises to the cytosol. It carries out the reaction dihydroprecondylocarpine acetate + NADP(+) = precondylocarpine acetate + NADPH + H(+). It participates in alkaloid biosynthesis. Functionally, component of the seco-iridoid and derivatives monoterpenoid indole alkaloids (MIAs, e.g. vinblastine, catharanthine, tabersonine, vincadifformine, vindoline, vincristine, quinine and strychnine) biosynthesis pathway. Catalyzes the non-canonical 1,4-reduction of an alpha,beta-unsaturated iminium moiety; by contrast with the classic alcohol dehydrogenase mechanism, this reaction does not require a catalytic zinc or proton relay. Converts precondylocarpine acetate to dihydroprecondylocarpine acetate, that is spontaneously converted into dehydrosecodine intermediate, precursor of angryline. May also trigger the non-stereoselective 1,4-reduction reaction at C15 of dehydrosecodine leading to the production of secodine, a precursor of vincadifformine. The chain is Dehydroprecondylocarpine acetate synthase from Catharanthus roseus (Madagascar periwinkle).